The sequence spans 135 residues: MESRHAIREAAFQALFALATNPEADKDAVYAEVLPQDTEVPAYLTTLVEGVLSKQADLDAALTPQLKKGWSLSRLTKPDLIILRLGLYEIRYEEAMPEAAAINEAINLAKRYSDDQSAKFVNGILANFIQATPQA.

This sequence belongs to the NusB family.

Functionally, involved in transcription antitermination. Required for transcription of ribosomal RNA (rRNA) genes. Binds specifically to the boxA antiterminator sequence of the ribosomal RNA (rrn) operons. This Lacticaseibacillus casei (strain BL23) (Lactobacillus casei) protein is Transcription antitermination protein NusB.